A 660-amino-acid polypeptide reads, in one-letter code: MTFVIADRYELGASIGSGGMSEVFAATDLLIGREVAVKMLRTDLAKDVNFRERFRREAQNAGKLSHPSIVAVFDTGEVDRDGISVPYIVMERVHGRDLRDIVREDGPYSPSQAATIMIPVCHALQSSHEAGIIHRDVKPANIMINNTGGVKVMDFGIARALDDSTSAMTQTAAVIGTAQYLSPEQARGKPADARSDVYAAGCVLYELVTGRPPFEGESPFAVAYQHVQEEPTPPSEYISDLSPTAALNVDAVVLTAMAKHPADRYQTAAEMAADLELLSRNAVSRAARAHVEKPDEPETVVVPQRLSTPPPPPTPAMPAATVAAPAAAPTAVGSRPAAARQPKRGSRALTVLAIVLTLGVIGVGGAFTYDFLSNSSSASTQQIPNIVGLPENEAVLELERLGFTVVLTTEPSPDVAEGLVIRTSPNVGSEIREGATVTLTISSGREVVTIPDVTGLTLAEATREIEGAGLVLDQSIREENSDDYPAGTVIQQNPRAGGETSVGASITLTVSTGPSLVRVPVITGMQWSQAESNITSLGLVPDIYYVDSLLPEGQVISASGQGTELPRGSTVTVEISNGMLIEAPDLARLDVDNALKALRDAGWTAPDTSLIEGAPIPTGALVDQGRIGFQDPSPGQPLRKDAVVNIRLYRFDLTALVPEP.

The Protein kinase domain maps to 9-278; sequence YELGASIGSG…AEMAADLELL (270 aa). Residues 15-23 and Lys-38 each bind ATP; that span reads IGSGGMSEV. Catalysis depends on Asp-136, which acts as the Proton acceptor. Residues 288-319 are disordered; the sequence is RAHVEKPDEPETVVVPQRLSTPPPPPTPAMPA. PASTA domains lie at 377 to 443, 444 to 512, and 513 to 577; these read SAST…TISS, GREV…TVST, and GPSL…EISN.

Belongs to the protein kinase superfamily. Ser/Thr protein kinase family.

It catalyses the reaction L-seryl-[protein] + ATP = O-phospho-L-seryl-[protein] + ADP + H(+). It carries out the reaction L-threonyl-[protein] + ATP = O-phospho-L-threonyl-[protein] + ADP + H(+). This Corynebacterium efficiens (strain DSM 44549 / YS-314 / AJ 12310 / JCM 11189 / NBRC 100395) protein is Probable serine/threonine-protein kinase CE0033.